The following is a 611-amino-acid chain: Chaperone protein DnaK (611 aa).

Thr172 carries the post-translational modification Phosphothreonine; by autocatalysis. Residues 575 to 611 form a disordered region; sequence AAQAAQAQQDGGNESADKQDDNVVDADYEEVNDDDKK. Acidic residues predominate over residues 596 to 611; that stretch reads NVVDADYEEVNDDDKK.

The protein belongs to the heat shock protein 70 family.

In terms of biological role, acts as a chaperone. The sequence is that of Chaperone protein DnaK from Shouchella clausii (strain KSM-K16) (Alkalihalobacillus clausii).